Reading from the N-terminus, the 278-residue chain is Small ribosomal subunit protein uS2 (278 aa).

Disordered regions lie at residues 216 to 235 (EAAA…TQWD) and 250 to 278 (NFAA…EWTN). The segment covering 256 to 278 (ADGNWGATTGGDWAAAGGEEWTN) has biased composition (low complexity).

It belongs to the universal ribosomal protein uS2 family. Component of the small ribosomal subunit. Mature ribosomes consist of a small (40S) and a large (60S) subunit. The 40S subunit contains about 33 different proteins and 1 molecule of RNA (18S). The 60S subunit contains about 49 different proteins and 3 molecules of RNA (25S, 5.8S and 5S). Interacts with ribosomal protein S21.

The protein resides in the cytoplasm. Functionally, required for the assembly and/or stability of the 40S ribosomal subunit. Required for the processing of the 20S rRNA-precursor to mature 18S rRNA in a late step of the maturation of 40S ribosomal subunits. This chain is Small ribosomal subunit protein uS2, found in Monosiga brevicollis (Choanoflagellate).